We begin with the raw amino-acid sequence, 141 residues long: ATP synthase epsilon chain 1 (141 aa).

This sequence belongs to the ATPase epsilon chain family. In terms of assembly, F-type ATPases have 2 components, CF(1) - the catalytic core - and CF(0) - the membrane proton channel. CF(1) has five subunits: alpha(3), beta(3), gamma(1), delta(1), epsilon(1). CF(0) has three main subunits: a, b and c.

The protein localises to the cell inner membrane. Its function is as follows. Produces ATP from ADP in the presence of a proton gradient across the membrane. The chain is ATP synthase epsilon chain 1 from Thiobacillus denitrificans (strain ATCC 25259 / T1).